The following is a 348-amino-acid chain: Matrix protein (348 aa).

Cys-251 and Cys-295 are oxidised to a cystine.

The protein belongs to the morbillivirus/respirovirus/rubulavirus M protein family.

The protein localises to the virion. Its function is as follows. The M protein has a crucial role in virus assembly and interacts with the RNP complex as well as with the viral membrane. This is Matrix protein (M) from Homo sapiens (Human).